The sequence spans 136 residues: Small ribosomal subunit protein uS9 (136 aa).

It belongs to the universal ribosomal protein uS9 family.

The protein is Small ribosomal subunit protein uS9 of Borrelia duttonii (strain Ly).